We begin with the raw amino-acid sequence, 153 residues long: Histone H2B.3 (153 aa).

Basic and acidic residues-rich tracts occupy residues 1–28 and 36–53; these read MAPK…EKAP and EKRL…EGRK. The disordered stretch occupies residues 1–61; that stretch reads MAPKAEKKPA…RKAGRKKAKK (61 aa). 2 positions are modified to N6-acetyllysine: K7 and K37. A Glycyl lysine isopeptide (Lys-Gly) (interchain with G-Cter in ubiquitin) cross-link involves residue K149.

It belongs to the histone H2B family. As to quaternary structure, the nucleosome is a histone octamer containing two molecules each of H2A, H2B, H3 and H4 assembled in one H3-H4 heterotetramer and two H2A-H2B heterodimers. The octamer wraps approximately 147 bp of DNA. Can be acetylated to form H2BK6ac and H2BK33ac. Post-translationally, monoubiquitinated by BRE1 to form H2BK143ub1 and deubiquitinated by UBP26. Required for heterochromatic histone H3 di- and trimethylation at H3K4me. May give a specific tag for epigenetic transcriptional activation.

The protein resides in the nucleus. Its subcellular location is the chromosome. Functionally, core component of nucleosome. Nucleosomes wrap and compact DNA into chromatin, limiting DNA accessibility to the cellular machineries which require DNA as a template. Histones thereby play a central role in transcription regulation, DNA repair, DNA replication and chromosomal stability. DNA accessibility is regulated via a complex set of post-translational modifications of histones, also called histone code, and nucleosome remodeling. The protein is Histone H2B.3 (H2B.3) of Oryza sativa subsp. japonica (Rice).